The following is a 399-amino-acid chain: Calsequestrin-2 (399 aa).

Residues 1 to 19 form the signal peptide; that stretch reads MKRTHLFIVGIYFLSSCRA. A Phosphotyrosine modification is found at tyrosine 282. An N-linked (GlcNAc...) asparagine glycan is attached at asparagine 335. Residues 365 to 399 are disordered; the sequence is VLSGKINTEDDDEDDDDDDNSDEEDNDDSDDDDDE. The segment covering 373–399 has biased composition (acidic residues); sequence EDDDEDDDDDDNSDEEDNDDSDDDDDE. Serine 385 and serine 393 each carry phosphoserine.

It belongs to the calsequestrin family. As to quaternary structure, monomer, homodimer and homooligomer. Mostly monomeric in the absence of calcium. Forms higher oligomers in a calcium-dependent manner. Dimers associate to form tetramers, that then form linear homomer chains. Interacts with ASPH and TRDN. Post-translationally, phosphorylation in the C-terminus, probably by CK2, moderately increases calcium buffering capacity. In terms of processing, N-glycosylated.

It localises to the sarcoplasmic reticulum lumen. In terms of biological role, calsequestrin is a high-capacity, moderate affinity, calcium-binding protein and thus acts as an internal calcium store in muscle. Calcium ions are bound by clusters of acidic residues at the protein surface, especially at the interface between subunits. Can bind around 60 Ca(2+) ions. Regulates the release of lumenal Ca(2+) via the calcium release channel RYR2; this plays an important role in triggering muscle contraction. Plays a role in excitation-contraction coupling in the heart and in regulating the rate of heart beats. The chain is Calsequestrin-2 (CASQ2) from Homo sapiens (Human).